Consider the following 242-residue polypeptide: Biosynthetic peptidoglycan transglycosylase (242 aa).

The helical transmembrane segment at 19–39 (ILAALAVFWGGGIALFSVVPV) threads the bilayer.

This sequence belongs to the glycosyltransferase 51 family.

The protein localises to the cell inner membrane. The enzyme catalyses [GlcNAc-(1-&gt;4)-Mur2Ac(oyl-L-Ala-gamma-D-Glu-L-Lys-D-Ala-D-Ala)](n)-di-trans,octa-cis-undecaprenyl diphosphate + beta-D-GlcNAc-(1-&gt;4)-Mur2Ac(oyl-L-Ala-gamma-D-Glu-L-Lys-D-Ala-D-Ala)-di-trans,octa-cis-undecaprenyl diphosphate = [GlcNAc-(1-&gt;4)-Mur2Ac(oyl-L-Ala-gamma-D-Glu-L-Lys-D-Ala-D-Ala)](n+1)-di-trans,octa-cis-undecaprenyl diphosphate + di-trans,octa-cis-undecaprenyl diphosphate + H(+). It functions in the pathway cell wall biogenesis; peptidoglycan biosynthesis. Its function is as follows. Peptidoglycan polymerase that catalyzes glycan chain elongation from lipid-linked precursors. This is Biosynthetic peptidoglycan transglycosylase from Salmonella choleraesuis (strain SC-B67).